The primary structure comprises 525 residues: uncharacterized protein (525 aa).

Residues 21–48 constitute a DNA-binding region (zn(2)-C6 fungal-type); the sequence is CLICRSMRKKCDEVHPQCGRCLKAGKQC.

The protein localises to the cytoplasm. The protein resides in the nucleus. This is an uncharacterized protein from Schizosaccharomyces pombe (strain 972 / ATCC 24843) (Fission yeast).